Consider the following 136-residue polypeptide: Histone H3.3C (136 aa).

A disordered region spans residues 1-42 (MARTKQTARKSTGGKAPRKQLVTKAAKKCAPATGGVKKPHRY). Arg3 carries the asymmetric dimethylarginine; by PRMT6 modification. Thr4 is modified (phosphothreonine; by HASPIN). Lys5 carries the post-translational modification Allysine; alternate. Lys5 carries the post-translational modification N6,N6,N6-trimethyllysine; alternate. The residue at position 5 (Lys5) is an N6,N6-dimethyllysine; alternate. At Lys5 the chain carries N6-(2-hydroxyisobutyryl)lysine; alternate. Lys5 is subject to N6-acetyllysine; alternate. Lys5 carries the N6-methyllysine; alternate modification. The residue at position 6 (Gln6) is a 5-glutamyl dopamine; alternate. Gln6 bears the 5-glutamyl serotonin; alternate mark. Thr7 carries the post-translational modification Phosphothreonine; by PKC. Lys10 bears the N6-(2-hydroxyisobutyryl)lysine; alternate mark. N6-lactoyllysine; alternate is present on Lys10. N6-methylated lysine is present on Lys10. Ser11 is subject to ADP-ribosylserine; alternate. Ser11 carries the phosphoserine; alternate; by AURKB, AURKC, RPS6KA3, RPS6KA4 and RPS6KA5 modification. Thr12 carries the post-translational modification Phosphothreonine; by PKC. Residue Lys15 is modified to N6-(2-hydroxyisobutyryl)lysine; alternate. N6-lactoyllysine; alternate is present on Lys15. N6-acetyllysine is present on Lys15. Lys15 carries the post-translational modification N6-glutaryllysine; alternate. Arg18 carries the asymmetric dimethylarginine modification. N6-(2-hydroxyisobutyryl)lysine; alternate is present on residues Lys19, Lys24, Lys28, and Lys37. Lys19 carries the N6-acetyllysine; alternate modification. Lys19, Lys24, and Lys28 each carry N6-lactoyllysine; alternate. Residues Lys19, Lys24, and Lys28 each carry the N6-glutaryllysine; alternate modification. Residues Lys19 and Lys24 each carry the N6-butyryllysine; alternate modification. Position 19 is an N6-methylated lysine; alternate (Lys19). N6-acetyllysine is present on Lys24. N6-acetyllysine; alternate is present on residues Lys28 and Lys37. Residues Lys28 and Lys37 each carry the N6-methylated lysine; alternate modification. The residue at position 42 (Tyr42) is a Phosphotyrosine. Lys57 bears the N6-(2-hydroxyisobutyryl)lysine; alternate mark. Lys57 bears the N6-lactoyllysine; alternate mark. Residue Lys57 is modified to N6-glutaryllysine; alternate. An N6-succinyllysine; alternate modification is found at Lys57. Ser58 bears the Phosphoserine mark. Residues Lys65 and Lys80 each carry the N6-(2-hydroxyisobutyryl)lysine; alternate modification. Residues Lys65 and Lys80 each carry the N6-methylated lysine modification. The residue at position 80 (Lys80) is an N6-lactoyllysine; alternate. N6-glutaryllysine; alternate is present on Lys80. N6-succinyllysine; alternate is present on Lys80. The residue at position 81 (Thr81) is a Phosphothreonine. Lys116 and Lys123 each carry N6-acetyllysine; alternate. 2 positions are modified to N6-glutaryllysine; alternate: Lys116 and Lys123. An N6-(2-hydroxyisobutyryl)lysine; alternate modification is found at Lys123. Lys123 carries the N6-methylated lysine; alternate modification. Residue Lys123 is modified to N6-succinyllysine; alternate.

It belongs to the histone H3 family. In terms of assembly, the nucleosome is a histone octamer containing two molecules each of H2A, H2B, H3 and H4 assembled in one H3-H4 heterotetramer and two H2A-H2B heterodimers. The octamer wraps approximately 147 bp of DNA. Acetylation is generally linked to gene activation. Acetylation on Lys-19 (H3K18ac) and Lys-24 (H3K24ac) favors methylation at Arg-18 (H3R17me). Acetylation at Lys-123 (H3K122ac) by EP300/p300 plays a central role in chromatin structure: localizes at the surface of the histone octamer and stimulates transcription, possibly by promoting nucleosome instability. Post-translationally, asymmetric dimethylation at Arg-18 (H3R17me2a) is linked to gene activation. Asymmetric dimethylation at Arg-3 (H3R2me2a) by PRMT6 is linked to gene repression and is mutually exclusive with H3 Lys-5 methylation (H3K4me2 and H3K4me3). H3R2me2a is present at the 3' of genes regardless of their transcription state and is enriched on inactive promoters, while it is absent on active promoters. In terms of processing, methylation at Lys-5 (H3K4me) and Lys-80 (H3K79me) are linked to gene activation. Methylation at Lys-5 (H3K4me) facilitates subsequent acetylation of H3 and H4. Methylation at Lys-80 (H3K79me) is associated with DNA double-strand break (DSB) responses and is a specific target for TP53BP1. Methylation at Lys-10 (H3K9me) and Lys-28 (H3K27me) are linked to gene repression. Methylation at Lys-10 (H3K9me) is a specific target for HP1 proteins (CBX1, CBX3 and CBX5) and prevents subsequent phosphorylation at Ser-11 (H3S10ph) and acetylation of H3 and H4. Methylation at Lys-5 (H3K4me) and Lys-80 (H3K79me) require preliminary monoubiquitination of H2B at 'Lys-120'. Phosphorylated at Thr-4 (H3T3ph) by HASPIN during prophase and dephosphorylated during anaphase. Phosphorylation at Ser-11 (H3S10ph) by aurkb is crucial for chromosome condensation and cell-cycle progression during mitosis and meiosis. In addition phosphorylation at Ser-11 (H3S10ph) by rps6ka4 and rps6ka5 is important during interphase because it enables the transcription of genes following external stimulation, like mitogens, stress, growth factors or UV irradiation and result in the activation of genes, such as c-fos and c-jun. Phosphorylation at Ser-11 (H3S10ph), which is linked to gene activation, prevents methylation at Lys-10 (H3K9me) but facilitates acetylation of H3 and H4. Phosphorylation at Ser-11 (H3S10ph) by aurkb mediates the dissociation of HP1 proteins (cbx1, cbx3 and cbx5) from heterochromatin. Phosphorylation at Ser-11 (H3S10ph) is also an essential regulatory mechanism for neoplastic cell transformation. Phosphorylation at Thr-7 (H3T6ph) by prkcb is a specific tag for epigenetic transcriptional activation that prevents demethylation of Lys-5 (H3K4me) by lsd1/kdm1a. At centromeres, specifically phosphorylated at Thr-12 (H3T11ph) from prophase to early anaphase, by DAPK3 and PKN1. Phosphorylation at Thr-12 (H3T11ph) by PKN1 or isoform M2 of PKM (PKM2) is a specific tag for epigenetic transcriptional activation that promotes demethylation of Lys-10 (H3K9me) by kdm4c/jmjd2c. Phosphorylation at Tyr-42 (H3Y41ph) by jak2 promotes exclusion of cbx5 (HP1 alpha) from chromatin. Post-translationally, lysine deamination at Lys-5 (H3K4all) to form allysine only takes place on H3K4me3 and results in gene repression. In terms of processing, butyrylation of histones marks active promoters and competes with histone acetylation. It is present during late spermatogenesis. Succinylation at Lys-80 (H3K79succ) by KAT2A takes place with a maximum frequency around the transcription start sites of genes. It gives a specific tag for epigenetic transcription activation. Desuccinylation at Lys-123 (H3K122succ) by SIRT7 in response to DNA damage promotes chromatin condensation and double-strand breaks (DSBs) repair. Post-translationally, serine ADP-ribosylation constitutes the primary form of ADP-ribosylation of proteins in response to DNA damage. Serine ADP-ribosylation at Ser-11 (H3S10ADPr) is mutually exclusive with phosphorylation at Ser-11 (H3S10ph) and impairs acetylation at Lys-10 (H3K9ac).

The protein localises to the nucleus. It is found in the chromosome. Core component of nucleosome. Nucleosomes wrap and compact DNA into chromatin, limiting DNA accessibility to the cellular machineries which require DNA as a template. Histones thereby play a central role in transcription regulation, DNA repair, DNA replication and chromosomal stability. DNA accessibility is regulated via a complex set of post-translational modifications of histones, also called histone code, and nucleosome remodeling. In Xenopus laevis (African clawed frog), this protein is Histone H3.3C (h3-5).